The primary structure comprises 488 residues: MDRKSIESIFNRIRTANCLVIGDLMLDEYLWGKAERISPEAPVQVVDVVREEMRLGGAGNVVNNLVELGAEVTVCSVVGDDDNGQALLEAFGRRGVATDAIFLDATRRTSRKTRVVAAHQQIVRIDRESRVPLSAEVERRVSDWITANAGGFDVILLSDYQKGVLTPGVISATLAAARPGAIPVLVDPKGTDFSRYSGATLLTPNRREAEAASGIAIHDIESLVRAAGVIMERVGLEHLLITRSEEGMSLFSRSAAPMHIPTVAREVFDVSGAGDTVLASLAAGMAAGMEMIEAARLANITAGIAVAKLGTSTVAPAEIINAVALAHSDSDSKIKNRDVLAVLIEAEKARGKRIVFTNGCFDLLHAGHVKYLQKARTLGDLLVLGLNSDASVRRLKGEKRPLIGEQERAHILAALDCIDYVVIFEEDTPLELIAALKPHILAKGGDYTPEGVVGRELVESYGGRVELVSFVDGKSTTNIIERVLERYS.

The tract at residues Met1–Ser330 is ribokinase. Asn205 to Glu208 contributes to the ATP binding site. Asp275 is an active-site residue. Residues Phe356–Ser488 form a cytidylyltransferase region.

It in the N-terminal section; belongs to the carbohydrate kinase PfkB family. The protein in the C-terminal section; belongs to the cytidylyltransferase family. As to quaternary structure, homodimer.

It catalyses the reaction D-glycero-beta-D-manno-heptose 7-phosphate + ATP = D-glycero-beta-D-manno-heptose 1,7-bisphosphate + ADP + H(+). The enzyme catalyses D-glycero-beta-D-manno-heptose 1-phosphate + ATP + H(+) = ADP-D-glycero-beta-D-manno-heptose + diphosphate. The protein operates within nucleotide-sugar biosynthesis; ADP-L-glycero-beta-D-manno-heptose biosynthesis; ADP-L-glycero-beta-D-manno-heptose from D-glycero-beta-D-manno-heptose 7-phosphate: step 1/4. It participates in nucleotide-sugar biosynthesis; ADP-L-glycero-beta-D-manno-heptose biosynthesis; ADP-L-glycero-beta-D-manno-heptose from D-glycero-beta-D-manno-heptose 7-phosphate: step 3/4. Its function is as follows. Catalyzes the phosphorylation of D-glycero-D-manno-heptose 7-phosphate at the C-1 position to selectively form D-glycero-beta-D-manno-heptose-1,7-bisphosphate. In terms of biological role, catalyzes the ADP transfer from ATP to D-glycero-beta-D-manno-heptose 1-phosphate, yielding ADP-D-glycero-beta-D-manno-heptose. This is Bifunctional protein HldE from Pelobacter propionicus (strain DSM 2379 / NBRC 103807 / OttBd1).